A 101-amino-acid polypeptide reads, in one-letter code: Small ribosomal subunit protein uS14 (101 aa).

Positions 48–69 (LSKLPRDSSPSRHRSRCELSGR) are disordered. Positions 51-68 (LPRDSSPSRHRSRCELSG) are enriched in basic and acidic residues.

It belongs to the universal ribosomal protein uS14 family. Part of the 30S ribosomal subunit. Contacts proteins S3 and S10.

In terms of biological role, binds 16S rRNA, required for the assembly of 30S particles and may also be responsible for determining the conformation of the 16S rRNA at the A site. The polypeptide is Small ribosomal subunit protein uS14 (Stenotrophomonas maltophilia (strain R551-3)).